A 751-amino-acid chain; its full sequence is Centrosomal protein of 68 kDa (751 aa).

Composition is skewed to basic and acidic residues over residues 1-17 (MALG…EDTK) and 86-96 (ASREPVAERSE). A disordered region spans residues 1-253 (MALGEEKAEA…PQPVFSGGDA (253 aa)). Polar residues-rich tracts occupy residues 131 to 144 (LPQT…TTIC) and 163 to 175 (APSS…SQWK). Positions 176 to 200 (SMPSPGSAAPQPSSCSVSASSTGSS) are enriched in low complexity. Residue Ser-326 is modified to Phosphoserine. Over residues 339 to 348 (STLKSPTNVF) the composition is skewed to polar residues. 3 disordered regions span residues 339-474 (STLK…ESDD), 511-545 (SPLE…SGDP), and 590-611 (RLDR…KGGE). Composition is skewed to basic and acidic residues over residues 399–416 (GSRD…RGAK) and 433–450 (RTRD…EKRT). Residues 451 to 461 (SQSARRPTCTE) are compositionally biased toward polar residues. A phosphoserine mark is found at Ser-466 and Ser-472. A compositionally biased stretch (low complexity) spans 520-537 (GPASLPSSSSQSQLPPGA).

In terms of assembly, interacts with CNTLN; the interaction recruits CEP68 to the centrosome. Interacts with the SCF(FBXW11) complex which contains SKP1, CUL1 and FBXW11; the interaction is probably mediated by FBXW11 and the complex also contains CDK5RAP2 and PCNT. Also interacts with F-box protein BTRC. Interacts with serine/threonine-protein kinase PLK1; the interaction leads to phosphorylation of CEP68 and its subsequent degradation. Interacts with NEK2; the interaction leads to phosphorylation of CEP68. Post-translationally, phosphorylation by PLK1 is required for binding to BTRC in prometaphase. Phosphorylated directly or indirectly by NEK2. NEK2-mediated phosphorylation promotes CEP68 dissociation from the centrosome and its degradation at the onset of mitosis. Ubiquitinated and targeted for proteasomal degradation in early mitosis by the SCF(BTRC) and/or SCF(FBXW11) E3 ubiquitin-protein ligase complexes. Degradation is complete by prometaphase and is required for removal of CDK5RAP2 from the peripheral pericentriolar material and subsequent centriole separation.

The protein localises to the cytoplasm. Its subcellular location is the cytoskeleton. The protein resides in the microtubule organizing center. It is found in the centrosome. Functionally, involved in maintenance of centrosome cohesion, probably as part of a linker structure which prevents centrosome splitting. Required for localization of CDK5RAP2 to the centrosome during interphase. Contributes to CROCC/rootletin filament formation. The sequence is that of Centrosomal protein of 68 kDa (CEP68) from Pongo abelii (Sumatran orangutan).